The sequence spans 85 residues: Putative septation protein SpoVG (85 aa).

This sequence belongs to the SpoVG family.

Functionally, could be involved in septation. The polypeptide is Putative septation protein SpoVG (Archaeoglobus fulgidus (strain ATCC 49558 / DSM 4304 / JCM 9628 / NBRC 100126 / VC-16)).